The following is a 519-amino-acid chain: Protein nucleotidyltransferase YdiU (519 aa).

ATP contacts are provided by G101, G103, R104, K124, D136, G137, R194, and R201. D271 functions as the Proton acceptor in the catalytic mechanism. Mg(2+)-binding residues include N272 and D281. D281 is an ATP binding site.

This sequence belongs to the SELO family. Mg(2+) is required as a cofactor. Mn(2+) serves as cofactor.

The catalysed reaction is L-seryl-[protein] + ATP = 3-O-(5'-adenylyl)-L-seryl-[protein] + diphosphate. It carries out the reaction L-threonyl-[protein] + ATP = 3-O-(5'-adenylyl)-L-threonyl-[protein] + diphosphate. It catalyses the reaction L-tyrosyl-[protein] + ATP = O-(5'-adenylyl)-L-tyrosyl-[protein] + diphosphate. The enzyme catalyses L-histidyl-[protein] + UTP = N(tele)-(5'-uridylyl)-L-histidyl-[protein] + diphosphate. The catalysed reaction is L-seryl-[protein] + UTP = O-(5'-uridylyl)-L-seryl-[protein] + diphosphate. It carries out the reaction L-tyrosyl-[protein] + UTP = O-(5'-uridylyl)-L-tyrosyl-[protein] + diphosphate. Functionally, nucleotidyltransferase involved in the post-translational modification of proteins. It can catalyze the addition of adenosine monophosphate (AMP) or uridine monophosphate (UMP) to a protein, resulting in modifications known as AMPylation and UMPylation. This Azoarcus sp. (strain BH72) protein is Protein nucleotidyltransferase YdiU.